Reading from the N-terminus, the 102-residue chain is Small ribosomal subunit protein uS10 (102 aa).

Belongs to the universal ribosomal protein uS10 family. In terms of assembly, part of the 30S ribosomal subunit.

Its function is as follows. Involved in the binding of tRNA to the ribosomes. This is Small ribosomal subunit protein uS10 from Fervidobacterium nodosum (strain ATCC 35602 / DSM 5306 / Rt17-B1).